The following is a 253-amino-acid chain: HTH-type transcriptional regulator AdiY (253 aa).

The HTH araC/xylS-type domain occupies 149–246 (DSVYQIIESD…GMTPLHYVSQ (98 aa)). 2 DNA-binding regions (H-T-H motif) span residues 166–187 (SMVA…KSEN) and 213–236 (ISQV…KDFY).

The sequence is that of HTH-type transcriptional regulator AdiY (adiY) from Escherichia coli (strain K12).